The following is a 369-amino-acid chain: Deoxyhypusine synthase (369 aa).

Residues 105–109, 131–133, Glu-137, and Asp-238 contribute to the NAD(+) site; these read SNLIS and TAG. Spermidine is bound at residue 136-137; sequence EE. Position 243 (Asp-243) interacts with spermidine. An NAD(+)-binding site is contributed by Gly-283. Residue His-288 participates in spermidine binding. Position 308–309 (308–309) interacts with NAD(+); the sequence is TA. Spermidine contacts are provided by residues 314 to 316 and 323 to 329; these read GSD and EAVSWGK. Lys-329 functions as the Nucleophile in the catalytic mechanism. 342 to 343 is a binding site for NAD(+); the sequence is DA.

This sequence belongs to the deoxyhypusine synthase family. Requires NAD(+) as cofactor.

It catalyses the reaction [eIF5A protein]-L-lysine + spermidine = [eIF5A protein]-deoxyhypusine + propane-1,3-diamine. It functions in the pathway protein modification; eIF5A hypusination. Functionally, catalyzes the NAD-dependent oxidative cleavage of spermidine and the subsequent transfer of the butylamine moiety of spermidine to the epsilon-amino group of a critical lysine residue of the eIF-5A precursor protein to form the intermediate deoxyhypusine residue. This is the first step of the post-translational modification of that lysine into an unusual amino acid residue named hypusine. Hypusination is unique to mature eIF-5A factor and is essential for its function. The polypeptide is Deoxyhypusine synthase (Dhps) (Rattus norvegicus (Rat)).